Reading from the N-terminus, the 480-residue chain is Aspartyl/glutamyl-tRNA(Asn/Gln) amidotransferase subunit B (480 aa).

Belongs to the GatB/GatE family. GatB subfamily. Heterotrimer of A, B and C subunits.

It carries out the reaction L-glutamyl-tRNA(Gln) + L-glutamine + ATP + H2O = L-glutaminyl-tRNA(Gln) + L-glutamate + ADP + phosphate + H(+). The enzyme catalyses L-aspartyl-tRNA(Asn) + L-glutamine + ATP + H2O = L-asparaginyl-tRNA(Asn) + L-glutamate + ADP + phosphate + 2 H(+). In terms of biological role, allows the formation of correctly charged Asn-tRNA(Asn) or Gln-tRNA(Gln) through the transamidation of misacylated Asp-tRNA(Asn) or Glu-tRNA(Gln) in organisms which lack either or both of asparaginyl-tRNA or glutaminyl-tRNA synthetases. The reaction takes place in the presence of glutamine and ATP through an activated phospho-Asp-tRNA(Asn) or phospho-Glu-tRNA(Gln). The sequence is that of Aspartyl/glutamyl-tRNA(Asn/Gln) amidotransferase subunit B from Streptococcus pneumoniae (strain 70585).